A 791-amino-acid polypeptide reads, in one-letter code: Nuclear cap-binding protein subunit 1-B (791 aa).

The tract at residues 1–24 is disordered; the sequence is MSRRRHSDENDGGQPHKRRRTSEP. One can recognise an MIF4G domain in the interval 28–240; it reads EDRLESLICR…CLWAQVQKLK (213 aa). The stretch at 641 to 714 forms a coiled coil; that stretch reads LHSTIRKMNK…SEQKNLFLVI (74 aa). The tract at residues 664–687 is disordered; sequence QRLAKQHKHRDSDDNDEDSGRKDG.

It belongs to the NCBP1 family. Component of the nuclear cap-binding complex (CBC), a heterodimer composed of ncbp1/cbp80 and ncbp2/cbp20 that interacts with m7GpppG-capped RNA. Component of an alternative nuclear cap-binding complex (CBC) composed of ncbp1/cbp80 and ncbp3.

It localises to the nucleus. It is found in the cytoplasm. Its function is as follows. Component of the cap-binding complex (CBC), which binds cotranscriptionally to the 5'-cap of pre-mRNAs and is involved in various processes such as pre-mRNA splicing, translation regulation, nonsense-mediated mRNA decay, RNA-mediated gene silencing (RNAi) by microRNAs (miRNAs) and mRNA export. The CBC complex is involved in mRNA export from the nucleus, leading to the recruitment of the mRNA export machinery to the 5'-end of mRNA and to mRNA export in a 5' to 3' direction through the nuclear pore. The CBC complex is also involved in mediating U snRNA and intronless mRNAs export from the nucleus. The CBC complex is essential for a pioneer round of mRNA translation, before steady state translation when the CBC complex is replaced by cytoplasmic cap-binding protein eIF4E. The pioneer round of mRNA translation mediated by the CBC complex plays a central role in nonsense-mediated mRNA decay (NMD), NMD only taking place in mRNAs bound to the CBC complex, but not on eIF4E-bound mRNAs. The CBC complex enhances NMD in mRNAs containing at least one exon-junction complex (EJC), promoting the interaction between UPF1 and UPF2. The CBC complex is also involved in 'failsafe' NMD, which is independent of the EJC complex, while it does not participate in Staufen-mediated mRNA decay (SMD). During cell proliferation, the CBC complex is also involved in microRNAs (miRNAs) biogenesis via its interaction with SRRT/ARS2 and is required for miRNA-mediated RNA interference. The CBC complex also acts as a negative regulator of parn, thereby acting as an inhibitor of mRNA deadenylation. In the CBC complex, NCBP1/CBP80 does not bind directly capped RNAs (m7GpppG-capped RNA) but is required to stabilize the movement of the N-terminal loop of NCBP2/CBP20 and lock the CBC into a high affinity cap-binding state with the cap structure. Associates with NCBP3 to form an alternative cap-binding complex (CBC) which plays a key role in mRNA export. The conventional CBC with NCBP2 binds both small nuclear RNA (snRNA) and messenger (mRNA) and is involved in their export from the nucleus whereas the alternative CBC with NCBP3 does not bind snRNA and associates only with mRNA thereby playing a role only in mRNA export. This Xenopus laevis (African clawed frog) protein is Nuclear cap-binding protein subunit 1-B (ncbp1-b).